A 352-amino-acid chain; its full sequence is Protein MGF 360-9L (352 aa).

It belongs to the asfivirus MGF 360 family. In terms of assembly, interacts with host STAT1; this interaction mediates STAT1 degradation through apoptosis. Interacts with host STAT2; this interaction mediates STAT2 degradation through the proteasome.

It is found in the host cytoplasm. Its function is as follows. Plays a role in virus cell tropism, and may be required for efficient virus replication in macrophages. This chain is Protein MGF 360-9L, found in Ornithodoros (relapsing fever ticks).